Here is a 509-residue protein sequence, read N- to C-terminus: Probable aspartic-type endopeptidase CTSD (509 aa).

An N-terminal signal peptide occupies residues Met-1–Ala-21. A Peptidase A1 domain is found at Tyr-102–Ala-408. Asp-120 is an active-site residue. Asn-174 is a glycosylation site (N-linked (GlcNAc...) asparagine). Asp-302 is an active-site residue. A glycan (N-linked (GlcNAc...) asparagine) is linked at Asn-361. The segment at Asn-451–Val-489 is disordered. Residues Gly-466–Thr-480 show a composition bias toward polar residues. N-linked (GlcNAc...) asparagine glycosylation occurs at Asn-484. The GPI-anchor amidated serine moiety is linked to residue Ser-485. Residues Ser-486 to Ser-509 constitute a propeptide, removed in mature form.

Belongs to the peptidase A1 family.

It is found in the cell membrane. In terms of biological role, probable GPI-anchored aspartic-type endopeptidase which contributes to virulence. This is Probable aspartic-type endopeptidase CTSD (CTSD) from Arthroderma benhamiae (strain ATCC MYA-4681 / CBS 112371) (Trichophyton mentagrophytes).